Consider the following 145-residue polypeptide: Protein SprT-like (145 aa).

Positions 4–140 (TNYVQEVSLA…VCGNCHGKLM (137 aa)) constitute a SprT-like domain. Histidine 64 contributes to the Zn(2+) binding site. Glutamate 65 is an active-site residue. Residue histidine 68 participates in Zn(2+) binding.

It belongs to the SprT family. Zn(2+) is required as a cofactor.

The protein resides in the cytoplasm. The protein is Protein SprT-like of Streptococcus pyogenes serotype M1.